A 101-amino-acid chain; its full sequence is Transcription factor ILI2 (101 aa).

The segment at 1–22 is disordered; it reads MSSSRRSRTSSRLAAAPPPTDE. Residues 8-63 form the bHLH domain; it reads RTSSRLAAAPPPTDEQMAELISKLQAVLPTRGGEANAKQASSAEVLQEACRYIRRL.

Belongs to the bHLH protein family.

Its function is as follows. Atypical and probable non DNA-binding bHLH transcription factor that integrates multiple signaling pathways to regulate cell elongation and plant development. This Oryza sativa subsp. indica (Rice) protein is Transcription factor ILI2 (ILI2).